The chain runs to 360 residues: Phospho-N-acetylmuramoyl-pentapeptide-transferase (360 aa).

Helical transmembrane passes span 25 to 45 (TGGAMVTGALFVFMFGPWIID), 71 to 91 (TPTMGGLMILSGLVVGTVLWA), 94 to 114 (LNPYVWIVLAVTLGFGFVGFY), 129 to 148 (SGRTRLAIETIIAAAACYAL), 168 to 188 (TAIYLGWFFVIFGGFIVVGAG), 199 to 219 (GLAIVPVMIAAASFGLVSYLA), 239 to 259 (LAVLCGALLGAGLGFLWFNAP), 263 to 283 (IFMGDTGSLALGGMLGTIAVA), 288 to 308 (FVLAVIGGLFVLEAVSVIVQV), and 337 to 357 (QIVIRFWIISVMLALAGLSTL).

It belongs to the glycosyltransferase 4 family. MraY subfamily. Mg(2+) is required as a cofactor.

Its subcellular location is the cell inner membrane. The enzyme catalyses UDP-N-acetyl-alpha-D-muramoyl-L-alanyl-gamma-D-glutamyl-meso-2,6-diaminopimeloyl-D-alanyl-D-alanine + di-trans,octa-cis-undecaprenyl phosphate = di-trans,octa-cis-undecaprenyl diphospho-N-acetyl-alpha-D-muramoyl-L-alanyl-D-glutamyl-meso-2,6-diaminopimeloyl-D-alanyl-D-alanine + UMP. It participates in cell wall biogenesis; peptidoglycan biosynthesis. Functionally, catalyzes the initial step of the lipid cycle reactions in the biosynthesis of the cell wall peptidoglycan: transfers peptidoglycan precursor phospho-MurNAc-pentapeptide from UDP-MurNAc-pentapeptide onto the lipid carrier undecaprenyl phosphate, yielding undecaprenyl-pyrophosphoryl-MurNAc-pentapeptide, known as lipid I. This is Phospho-N-acetylmuramoyl-pentapeptide-transferase from Rhodopseudomonas palustris (strain BisA53).